Consider the following 205-residue polypeptide: MSDTELTTSDFTEAAEPFRLFAAWLDDATKSEINDANGVALATVDAEGMPDVRMVLLKGFDEGGFVFYTNFESAKGQEILGSMKAAMCFHWKSLRRQVRIRGPVEIVSDAEADAYYATRPRGSRIGAWASKQSRPLESRFALEKAVAEYTARYAIGEIPRPKHWSGFRIVPKTIEFWHDRPFRLHDRVVFSRNAKGDWDKARLYP.

Residues 53-58 (RMVLLK), 68-69 (YT), K75, and Q97 contribute to the FMN site. K58 provides a ligand contact to substrate. Substrate contacts are provided by Y115, R119, and S123. FMN contacts are provided by residues 132–133 (QS) and W177. 183–185 (RLH) serves as a coordination point for substrate. Residue R187 coordinates FMN.

It belongs to the pyridoxamine 5'-phosphate oxidase family. Homodimer. FMN serves as cofactor.

It carries out the reaction pyridoxamine 5'-phosphate + O2 + H2O = pyridoxal 5'-phosphate + H2O2 + NH4(+). The catalysed reaction is pyridoxine 5'-phosphate + O2 = pyridoxal 5'-phosphate + H2O2. The protein operates within cofactor metabolism; pyridoxal 5'-phosphate salvage; pyridoxal 5'-phosphate from pyridoxamine 5'-phosphate: step 1/1. Its pathway is cofactor metabolism; pyridoxal 5'-phosphate salvage; pyridoxal 5'-phosphate from pyridoxine 5'-phosphate: step 1/1. In terms of biological role, catalyzes the oxidation of either pyridoxine 5'-phosphate (PNP) or pyridoxamine 5'-phosphate (PMP) into pyridoxal 5'-phosphate (PLP). This is Pyridoxine/pyridoxamine 5'-phosphate oxidase from Mesorhizobium japonicum (strain LMG 29417 / CECT 9101 / MAFF 303099) (Mesorhizobium loti (strain MAFF 303099)).